The chain runs to 231 residues: NADH-ubiquinone oxidoreductase chain 4 (231 aa).

The next 6 membrane-spanning stretches (helical) occupy residues 1 to 21 (PIAGSMVLAAILLKLGGYGII), 34 to 54 (MFIPFIVLALWGAILANLTCL), 63 to 85 (IAYSSISHMGLVVATIIIQTPWG), 89 to 111 (AMALMIAHGFTSSALFCLANTTY), 128 to 148 (ILPMTTTWWLLANLMNIAMPP), and 169 to 189 (TIIMLGLSMLITASYSLHMFL).

This sequence belongs to the complex I subunit 4 family.

Its subcellular location is the mitochondrion membrane. It carries out the reaction a ubiquinone + NADH + 5 H(+)(in) = a ubiquinol + NAD(+) + 4 H(+)(out). Core subunit of the mitochondrial membrane respiratory chain NADH dehydrogenase (Complex I) that is believed to belong to the minimal assembly required for catalysis. Complex I functions in the transfer of electrons from NADH to the respiratory chain. The immediate electron acceptor for the enzyme is believed to be ubiquinone. The chain is NADH-ubiquinone oxidoreductase chain 4 (MT-ND4) from Lachesis muta muta (Bushmaster).